A 977-amino-acid polypeptide reads, in one-letter code: Probable RNA-dependent RNA polymerase 5 (977 aa).

A disordered region spans residues 103-122; it reads EEMSVDSDAPSPKSLKSEDK.

It belongs to the RdRP family.

It catalyses the reaction RNA(n) + a ribonucleoside 5'-triphosphate = RNA(n+1) + diphosphate. In terms of biological role, probably involved in the RNA silencing pathway and required for the generation of small interfering RNAs (siRNAs). In Arabidopsis thaliana (Mouse-ear cress), this protein is Probable RNA-dependent RNA polymerase 5 (RDR5).